The primary structure comprises 224 residues: LOB domain-containing protein 15 (224 aa).

The 102-residue stretch at threonine 44–isoleucine 145 folds into the LOB domain. The segment at serine 171–glycine 224 is disordered. A compositionally biased stretch (pro residues) spans alanine 178–proline 198.

This sequence belongs to the LOB domain-containing protein family. As to expression, expressed in young shoots, roots, stems, leaves and flowers.

The polypeptide is LOB domain-containing protein 15 (LBD15) (Arabidopsis thaliana (Mouse-ear cress)).